A 171-amino-acid chain; its full sequence is uncharacterized protein (171 aa).

Residues 33–166 (AISIATNLYR…LTGLLRKVAD (134 aa)) form the HTH marR-type domain. Positions 80 to 103 (TRKIAELSGISTATASNVIKTLEK) form a DNA-binding region, H-T-H motif.

This is an uncharacterized protein from Bacillus subtilis (strain 168).